We begin with the raw amino-acid sequence, 921 residues long: Retinoblastoma-associated protein (921 aa).

A disordered region spans residues 1–36; sequence MPPKAPRRAAAAEPPPPPPPPPREDDPAQDSGPEEL. At Pro-2 the chain carries N,N-dimethylproline; by NTM1. Ser-31 and Ser-243 each carry phosphoserine. 4 positions are modified to phosphothreonine: Thr-246, Thr-350, Thr-364, and Thr-367. A disordered region spans residues 341 to 360; it reads PIDSFETERTPRKNNPDEEA. Basic and acidic residues predominate over residues 346–356; that stretch reads ETERTPRKNNP. A domain A region spans residues 367-573; that stretch reads TPVRTVMNTI…FDLIKQSKDG (207 aa). The tract at residues 367-764 is pocket; binds T and E1A; it reads TPVRTVMNTI…QRLKTNILQY (398 aa). Ser-561 is subject to Phosphoserine; by CDK2. Residues 574-632 form a spacer region; it reads EGPDNLEPACPLSLPLQGNHTAADMYLSPLRSPKKRTSTTRVNSAANTETQAASAFHTQ. 3 positions are modified to phosphoserine: Ser-601, Ser-605, and Ser-617. A domain B region spans residues 633–764; sequence KPLKSTSLAL…QRLKTNILQY (132 aa). The interaction with LIMD1 stretch occupies residues 756-921; that stretch reads RLKTNILQYA…SKDVSNKEEK (166 aa). Positions 764-921 are domain; mediates interaction with E4F1; sequence YASTRPPTLS…SKDVSNKEEK (158 aa). Phosphoserine is present on residues Ser-773, Ser-781, Ser-788, and Ser-800. Lys-803 is subject to N6-methyllysine; by SMYD2. Residue Ser-804 is modified to Phosphoserine. 4 positions are modified to phosphothreonine: Thr-814, Thr-816, Thr-819, and Thr-834. A Phosphoserine modification is found at Ser-848. Lys-853 is modified (N6-methyllysine; by SMYD2). A Bipartite nuclear localization signal motif is present at residues 853–869; that stretch reads KRSAEGGNPPKPLKKLR. An N6-acetyllysine; by PCAF mark is found at Lys-866 and Lys-867. The interval 872 to 921 is disordered; it reads IEGADEADGSKHLPAESKFQQKLAEMTSTRTRMQKQRMNESKDVSNKEEK. Positions 908–921 are enriched in basic and acidic residues; sequence RMNESKDVSNKEEK.

This sequence belongs to the retinoblastoma protein (RB) family. In terms of assembly, the hypophosphorylated form interacts with and sequesters the E2F1 transcription factor, thereby inhibiting E2F1 transcription. Interacts with heterodimeric E2F/DP transcription factor complexes containing TFDP1 and either E2F1/E2F, E2F3, E2F4 or E2F5, or TFDP2 and E2F4. Interacts (when hyperphosphorylated and hypophosphorylated) with PKP3; the interaction inhibits RB1 interaction with and repression of the transcription factor E2F1, potentially via sequestering RB1 to the cytoplasm. The unphosphorylated form interacts with EID1, ARID3B, KDM5A, SUV39H1, MJD2A/JHDM3A and THOC1. Interacts with the N-terminal domain of TAF1. Interacts with SNW1, ATAD5, AATF, DNMT1, LIN9, LMNA, KMT5B, KMT5C, PELP1, UHRF2, TMPO-alpha and USP4. Interacts with GRIP1 and UBR4. Interacts with ARID4A and KDM5B. Interacts with E4F1 and LIMD1. Interacts with SMARCA4/BRG1 and HDAC1. Interacts with USP4. Interacts (when methylated at Lys-853) with L3MBTL1. Binds to CDK1 and CDK2. Interacts with CHEK2; phosphorylates RB1. Interacts with PRMT2. Interacts with CEBPA. P-TEFB complex interacts with RB1; promotes phosphorylation of RB1. Interacts with RBBP9; the interaction disrupts RB1 binding to E2F1. Interacts with KAT2B/PCAF and EP300/P300. Interacts with PAX5. Interacts (phosphorylated and unphosphorylated) with BLCAP. May interact with NDC80. As to quaternary structure, (Microbial infection) Interacts with adenovirus E1a protein. (Microbial infection) Interacts with SV40 large T antigen. Post-translationally, phosphorylated. Phosphorylated by CDK6 and CDK4, and subsequently by CDK2 at Ser-561 in G1, thereby releasing E2F1 which is then able to activate cell growth. Dephosphorylated at the late M phase. Phosphorylation of threonine residues in domain C promotes interaction between the C-terminal domain C and the Pocket domain, and thereby inhibits interactions with heterodimeric E2F/DP transcription factor complexes. Dephosphorylated at Ser-788 by calcineruin upon calcium stimulation. CDK3/cyclin-C-mediated phosphorylation at Ser-800 and Ser-804 is required for G0-G1 transition. Phosphorylated by CDK1 and CDK2 upon TGFB1-mediated apoptosis. Monomethylation at Lys-803 by SMYD2 enhances phosphorylation at Ser-800 and Ser-804, and promotes cell cycle progression. Monomethylation at Lys-853 by SMYD2 promotes interaction with L3MBTL1. N-terminus is methylated by METTL11A/NTM1. In terms of processing, acetylated in the skin. Acetylation at Lys-866 and Lys-867 regulates subcellular localization during keratinocytes differentiation. As to expression, expressed in the cell nuclei of renal tubules, hepatocytes and skeletal muscles. Expressed in skin (at protein level).

It localises to the nucleus. It is found in the cytoplasm. Tumor suppressor that is a key regulator of the G1/S transition of the cell cycle. The hypophosphorylated form binds transcription regulators of the E2F family, preventing transcription of E2F-responsive genes. Both physically blocks E2Fs transactivating domain and recruits chromatin-modifying enzymes that actively repress transcription. Cyclin and CDK-dependent phosphorylation of RB1 induces its dissociation from E2Fs, thereby activating transcription of E2F responsive genes and triggering entry into S phase. RB1 also promotes the G0-G1 transition upon phosphorylation and activation by CDK3/cyclin-C. Directly involved in heterochromatin formation by maintaining overall chromatin structure and, in particular, that of constitutive heterochromatin by stabilizing histone methylation. Recruits and targets histone methyltransferases SUV39H1, KMT5B and KMT5C, leading to epigenetic transcriptional repression. Controls histone H4 'Lys-20' trimethylation. Inhibits the intrinsic kinase activity of TAF1. Mediates transcriptional repression by SMARCA4/BRG1 by recruiting a histone deacetylase (HDAC) complex to the c-FOS promoter. In resting neurons, transcription of the c-FOS promoter is inhibited by BRG1-dependent recruitment of a phospho-RB1-HDAC1 repressor complex. Upon calcium influx, RB1 is dephosphorylated by calcineurin, which leads to release of the repressor complex. The protein is Retinoblastoma-associated protein (Rb1) of Mus musculus (Mouse).